An 83-amino-acid chain; its full sequence is Host transcription reprogramming factor 9 (83 aa).

The first 19 residues, 1 to 19, serve as a signal peptide directing secretion; the sequence is MQFSKITLAIVLYALGTAA. The C2H2-type zinc-finger motif lies at 54-77; that stretch reads YRCDKCEKEFVKGNDFFNHGGRGH.

The protein localises to the secreted. The protein resides in the host nucleus. In terms of biological role, probable secreted effector that translocates into the nuclei of host cells to reprogram the expression of targeted genes by binding on effector binding elements in rice. The sequence is that of Host transcription reprogramming factor 9 from Pyricularia oryzae (strain 70-15 / ATCC MYA-4617 / FGSC 8958) (Rice blast fungus).